Here is a 137-residue protein sequence, read N- to C-terminus: uncharacterized protein (137 aa).

Residues 116–136 (YLSIANLATLLLFGIIGLSII) form a helical membrane-spanning segment.

The protein localises to the host membrane. This is an uncharacterized protein from His1 virus (isolate Australia/Victoria) (His1V).